The chain runs to 802 residues: Copper-exporting P-type ATPase (802 aa).

2 consecutive HMA domains span residues 5 to 70 (KKTT…YGVA) and 72 to 138 (ETVE…YDAS). The Cu(+) site is built by C16, C19, C83, and C86. 6 helical membrane-spanning segments follow: residues 161 to 181 (LIISAVLSLPLLMLMFVHLFN), 192 to 212 (WFQFILATPVQFIIGWQFYVG), 224 to 244 (MDVLVAVGTSAAYFYSIYEMV), 256 to 276 (LYFETSAVLITLILFGKYLEA), 411 to 431 (YFVPIVVGIALLTFIVWITLV), and 438 to 458 (PALVASISVLVIACPCALGLA). D495 serves as the catalytic 4-aspartylphosphate intermediate. Mg(2+)-binding residues include D690 and D694. The next 2 helical transmembrane spans lie at 748–767 (LFWAFGYNIAGIPIAALGLL) and 771–790 (VAGAAMALSSVSVVTNALRL).

This sequence belongs to the cation transport ATPase (P-type) (TC 3.A.3) family. Type IB subfamily.

The protein resides in the cell membrane. The catalysed reaction is Cu(+)(in) + ATP + H2O = Cu(+)(out) + ADP + phosphate + H(+). Its function is as follows. Involved in copper export. The sequence is that of Copper-exporting P-type ATPase (copA) from Staphylococcus aureus (strain MW2).